Here is a 175-residue protein sequence, read N- to C-terminus: ATP synthase subunit b (175 aa).

Residues 14–34 (LNPNPGLIFWTALTFLIVLVI) form a helical membrane-spanning segment.

It belongs to the ATPase B chain family. As to quaternary structure, F-type ATPases have 2 components, F(1) - the catalytic core - and F(0) - the membrane proton channel. F(1) has five subunits: alpha(3), beta(3), gamma(1), delta(1), epsilon(1). F(0) has four main subunits: a(1), b(2) and c(10-14). The alpha and beta chains form an alternating ring which encloses part of the gamma chain. F(1) is attached to F(0) by a central stalk formed by the gamma and epsilon chains, while a peripheral stalk is formed by the delta and b chains.

The protein resides in the cell inner membrane. Its function is as follows. F(1)F(0) ATP synthase produces ATP from ADP in the presence of a proton or sodium gradient. F-type ATPases consist of two structural domains, F(1) containing the extramembraneous catalytic core and F(0) containing the membrane proton channel, linked together by a central stalk and a peripheral stalk. During catalysis, ATP synthesis in the catalytic domain of F(1) is coupled via a rotary mechanism of the central stalk subunits to proton translocation. In terms of biological role, component of the F(0) channel, it forms part of the peripheral stalk, linking F(1) to F(0). This Chlorobaculum tepidum (strain ATCC 49652 / DSM 12025 / NBRC 103806 / TLS) (Chlorobium tepidum) protein is ATP synthase subunit b.